A 356-amino-acid polypeptide reads, in one-letter code: Histidinol-phosphate aminotransferase 1 (356 aa).

Position 213 is an N6-(pyridoxal phosphate)lysine (Lys-213).

This sequence belongs to the class-II pyridoxal-phosphate-dependent aminotransferase family. Histidinol-phosphate aminotransferase subfamily. As to quaternary structure, homodimer. The cofactor is pyridoxal 5'-phosphate.

It carries out the reaction L-histidinol phosphate + 2-oxoglutarate = 3-(imidazol-4-yl)-2-oxopropyl phosphate + L-glutamate. The protein operates within amino-acid biosynthesis; L-histidine biosynthesis; L-histidine from 5-phospho-alpha-D-ribose 1-diphosphate: step 7/9. The protein is Histidinol-phosphate aminotransferase 1 of Burkholderia pseudomallei (strain K96243).